Reading from the N-terminus, the 201-residue chain is MNLVPMVVDQTPRGERAYDIFSRLLKERVVFLTGPIEDGMASLIVAQLLFLEAENPDKDIFMYINSPGGVVTAGLSIYDTMQYIKPSVSTVCVGQAASAASLILASGAEGKRFALPHSRVMVHQPSGGVRGQATDMEIHVKEILQLKRMINEIYQKHTGETIKKIETLLERDTFLSPEEAKKVGIIDDIITQRKENSGKQE.

Catalysis depends on S98, which acts as the Nucleophile. Residue H123 is part of the active site.

It belongs to the peptidase S14 family. In terms of assembly, fourteen ClpP subunits assemble into 2 heptameric rings which stack back to back to give a disk-like structure with a central cavity, resembling the structure of eukaryotic proteasomes.

The protein localises to the cytoplasm. It carries out the reaction Hydrolysis of proteins to small peptides in the presence of ATP and magnesium. alpha-casein is the usual test substrate. In the absence of ATP, only oligopeptides shorter than five residues are hydrolyzed (such as succinyl-Leu-Tyr-|-NHMec, and Leu-Tyr-Leu-|-Tyr-Trp, in which cleavage of the -Tyr-|-Leu- and -Tyr-|-Trp bonds also occurs).. In terms of biological role, cleaves peptides in various proteins in a process that requires ATP hydrolysis. Has a chymotrypsin-like activity. Plays a major role in the degradation of misfolded proteins. This Neorickettsia sennetsu (strain ATCC VR-367 / Miyayama) (Ehrlichia sennetsu) protein is ATP-dependent Clp protease proteolytic subunit.